A 115-amino-acid polypeptide reads, in one-letter code: NADH-ubiquinone oxidoreductase chain 3 (115 aa).

The next 3 membrane-spanning stretches (helical) occupy residues 1–21 (MMML…VMLL), 58–78 (IAVI…IVII), and 84–104 (IMVW…GLYY).

The protein belongs to the complex I subunit 3 family.

Its subcellular location is the mitochondrion membrane. The catalysed reaction is a ubiquinone + NADH + 5 H(+)(in) = a ubiquinol + NAD(+) + 4 H(+)(out). Its function is as follows. Core subunit of the mitochondrial membrane respiratory chain NADH dehydrogenase (Complex I) that is believed to belong to the minimal assembly required for catalysis. Complex I functions in the transfer of electrons from NADH to the respiratory chain. The immediate electron acceptor for the enzyme is believed to be ubiquinone. The sequence is that of NADH-ubiquinone oxidoreductase chain 3 (ND3) from Locusta migratoria (Migratory locust).